Here is an 86-residue protein sequence, read N- to C-terminus: UPF0335 protein BR1752/BS1330_I1746 (86 aa).

The protein belongs to the UPF0335 family.

This is UPF0335 protein BR1752/BS1330_I1746 from Brucella suis biovar 1 (strain 1330).